Here is a 102-residue protein sequence, read N- to C-terminus: Small ribosomal subunit protein uS10 (102 aa).

The protein belongs to the universal ribosomal protein uS10 family. In terms of assembly, part of the 30S ribosomal subunit.

Functionally, involved in the binding of tRNA to the ribosomes. This chain is Small ribosomal subunit protein uS10, found in Streptococcus suis (strain 98HAH33).